Consider the following 54-residue polypeptide: Rubredoxin (54 aa).

The region spanning 1 to 54 (MKKYQCIVCGWIYDEAEGWPQDGIAPGTKWEDIPDDWTCPDCGVSKVDFEMIEV) is the Rubredoxin-like domain. Fe cation is bound by residues Cys-6, Cys-9, Cys-39, and Cys-42.

It belongs to the rubredoxin family. The cofactor is Fe(3+).

It is found in the cytoplasm. The protein operates within hydrocarbon metabolism; alkane degradation. Functionally, involved in the hydrocarbon hydroxylating system, which transfers electrons from NADH to rubredoxin reductase and then through rubredoxin to alkane 1 monooxygenase. This is Rubredoxin (rubA) from Acinetobacter baylyi (strain ATCC 33305 / BD413 / ADP1).